The following is a 258-amino-acid chain: Imidazole glycerol phosphate synthase subunit HisF (258 aa).

Catalysis depends on residues D11 and D130.

It belongs to the HisA/HisF family. Heterodimer of HisH and HisF.

The protein localises to the cytoplasm. It carries out the reaction 5-[(5-phospho-1-deoxy-D-ribulos-1-ylimino)methylamino]-1-(5-phospho-beta-D-ribosyl)imidazole-4-carboxamide + L-glutamine = D-erythro-1-(imidazol-4-yl)glycerol 3-phosphate + 5-amino-1-(5-phospho-beta-D-ribosyl)imidazole-4-carboxamide + L-glutamate + H(+). Its pathway is amino-acid biosynthesis; L-histidine biosynthesis; L-histidine from 5-phospho-alpha-D-ribose 1-diphosphate: step 5/9. In terms of biological role, IGPS catalyzes the conversion of PRFAR and glutamine to IGP, AICAR and glutamate. The HisF subunit catalyzes the cyclization activity that produces IGP and AICAR from PRFAR using the ammonia provided by the HisH subunit. The polypeptide is Imidazole glycerol phosphate synthase subunit HisF (Haemophilus influenzae (strain 86-028NP)).